The primary structure comprises 131 residues: D-ribose pyranase (131 aa).

The active-site Proton donor is the His-20. Residues Asp-28, His-98, and 120-122 each bind substrate; that span reads YSN.

The protein belongs to the RbsD / FucU family. RbsD subfamily. In terms of assembly, homodecamer.

The protein localises to the cytoplasm. The enzyme catalyses beta-D-ribopyranose = beta-D-ribofuranose. It participates in carbohydrate metabolism; D-ribose degradation; D-ribose 5-phosphate from beta-D-ribopyranose: step 1/2. Its function is as follows. Catalyzes the interconversion of beta-pyran and beta-furan forms of D-ribose. The chain is D-ribose pyranase from Lactobacillus gasseri (strain ATCC 33323 / DSM 20243 / BCRC 14619 / CIP 102991 / JCM 1131 / KCTC 3163 / NCIMB 11718 / NCTC 13722 / AM63).